A 100-amino-acid chain; its full sequence is NADH-quinone oxidoreductase subunit K (100 aa).

The next 3 membrane-spanning stretches (helical) occupy residues 2–22 (VTLNHYLILSSLLFMIGLVGV), 28–48 (LLMLFFSTEIMLNAVNVGLVA), and 63–83 (FFIIAVAASEVAVGLGLLILW).

It belongs to the complex I subunit 4L family. NDH-1 is composed of 14 different subunits. Subunits NuoA, H, J, K, L, M, N constitute the membrane sector of the complex.

Its subcellular location is the cell inner membrane. It carries out the reaction a quinone + NADH + 5 H(+)(in) = a quinol + NAD(+) + 4 H(+)(out). Functionally, NDH-1 shuttles electrons from NADH, via FMN and iron-sulfur (Fe-S) centers, to quinones in the respiratory chain. The immediate electron acceptor for the enzyme in this species is believed to be ubiquinone. Couples the redox reaction to proton translocation (for every two electrons transferred, four hydrogen ions are translocated across the cytoplasmic membrane), and thus conserves the redox energy in a proton gradient. The sequence is that of NADH-quinone oxidoreductase subunit K from Wolinella succinogenes (strain ATCC 29543 / DSM 1740 / CCUG 13145 / JCM 31913 / LMG 7466 / NCTC 11488 / FDC 602W) (Vibrio succinogenes).